A 312-amino-acid polypeptide reads, in one-letter code: DNA-directed RNA polymerase subunit alpha (312 aa).

The interval 1 to 226 (MIEFEKPNIT…EHFKVFMSTD (226 aa)) is alpha N-terminal domain (alpha-NTD). The tract at residues 243–312 (NEKKLEMTIE…ELGLSLRQDD (70 aa)) is alpha C-terminal domain (alpha-CTD).

Belongs to the RNA polymerase alpha chain family. In terms of assembly, homodimer. The RNAP catalytic core consists of 2 alpha, 1 beta, 1 beta' and 1 omega subunit. When a sigma factor is associated with the core the holoenzyme is formed, which can initiate transcription.

The catalysed reaction is RNA(n) + a ribonucleoside 5'-triphosphate = RNA(n+1) + diphosphate. In terms of biological role, DNA-dependent RNA polymerase catalyzes the transcription of DNA into RNA using the four ribonucleoside triphosphates as substrates. In Lactobacillus gasseri (strain ATCC 33323 / DSM 20243 / BCRC 14619 / CIP 102991 / JCM 1131 / KCTC 3163 / NCIMB 11718 / NCTC 13722 / AM63), this protein is DNA-directed RNA polymerase subunit alpha.